We begin with the raw amino-acid sequence, 160 residues long: Bcl-2-like gene 16 protein (160 aa).

Positions 64–84 (LLTTEHTTNWGKVVAMLSFSA) match the BH1 motif.

Belongs to the Bcl-2 family.

The polypeptide is Bcl-2-like gene 16 protein (16) (Saimiri sciureus (Common squirrel monkey)).